The primary structure comprises 94 residues: Co-chaperonin GroES (94 aa).

In terms of assembly, heptamer of 7 subunits arranged in a ring. Interacts with the chaperonin GroEL.

Its subcellular location is the cytoplasm. Functionally, together with the chaperonin GroEL, plays an essential role in assisting protein folding. The GroEL-GroES system forms a nano-cage that allows encapsulation of the non-native substrate proteins and provides a physical environment optimized to promote and accelerate protein folding. GroES binds to the apical surface of the GroEL ring, thereby capping the opening of the GroEL channel. This Thermoanaerobacter brockii (Thermoanaerobium brockii) protein is Co-chaperonin GroES.